The sequence spans 502 residues: Na(+)/H(+) antiporter NhaB (502 aa).

11 helical membrane-spanning segments follow: residues 27-49, 66-86, 95-115, 128-148, 149-169, 241-261, 299-318, 350-370, 394-414, 450-470, and 477-497; these read AFLV…VLIL, PGGL…ESVF, VILL…LLLY, IVLS…LDAL, TVTA…HQFA, FFLQ…VTCI, IAAL…SLAL, FEEA…VAVI, MFFI…VATV, ATPN…APLI, and MVLM…IAVY.

Belongs to the NhaB Na(+)/H(+) (TC 2.A.34) antiporter family.

The protein localises to the cell inner membrane. The enzyme catalyses 2 Na(+)(in) + 3 H(+)(out) = 2 Na(+)(out) + 3 H(+)(in). Its function is as follows. Na(+)/H(+) antiporter that extrudes sodium in exchange for external protons. The protein is Na(+)/H(+) antiporter NhaB of Teredinibacter turnerae (strain ATCC 39867 / T7901).